The chain runs to 421 residues: NADH-dependent phenylglyoxylate dehydrogenase subunit epsilon (421 aa).

Residues 15–18 (SSHA), 39–40 (TR), and 279–297 (ATAQ…NAIL) each bind FAD.

This sequence belongs to the FAD-dependent oxidoreductase family. As to quaternary structure, dimer of heteropentamers composed of an alpha (PadG), a beta (PadI), a gamma (PadE), a delta (PadF) and an epsilon (PadH) subunit. The cofactor is FAD.

It carries out the reaction phenylglyoxylate + NAD(+) + CoA = benzoyl-CoA + CO2 + NADH. Its activity is regulated as follows. Activated by magnesium ions and thiamine diphosphate. In terms of biological role, involved in the anaerobic metabolism of phenylalanine and phenylacetate. Catalyzes the oxidative decarboxylation of phenylglyoxylate to benzoyl-CoA and CO(2). It can also react slowly with 2-oxo-3-methylbutanoate and use different electron acceptors such as benzyl viologen, methyl viologen, FAD or FMN, but NAD seems to be the physiological electron acceptor. Also catalyzes an isotope exchange between CO(2) and the carboxyl group which proves partial or complete reversibility of the oxidative decarboxylation reaction. The sequence is that of NADH-dependent phenylglyoxylate dehydrogenase subunit epsilon (padH) from Aromatoleum evansii (Azoarcus evansii).